A 368-amino-acid chain; its full sequence is Phospho-N-acetylmuramoyl-pentapeptide-transferase (368 aa).

Helical transmembrane passes span 30-50, 72-92, 98-118, 139-159, 170-190, 201-221, 238-258, 262-284, and 345-365; these read AAAI…IRFL, VPTM…LLWA, HVWL…IDDY, VALG…SVLL, FSVD…TAVS, GLAA…AYLG, AGEI…FLWF, PAEV…VIAL, and KIVI…LMTL.

It belongs to the glycosyltransferase 4 family. MraY subfamily. Mg(2+) is required as a cofactor.

Its subcellular location is the cell inner membrane. It carries out the reaction UDP-N-acetyl-alpha-D-muramoyl-L-alanyl-gamma-D-glutamyl-meso-2,6-diaminopimeloyl-D-alanyl-D-alanine + di-trans,octa-cis-undecaprenyl phosphate = di-trans,octa-cis-undecaprenyl diphospho-N-acetyl-alpha-D-muramoyl-L-alanyl-D-glutamyl-meso-2,6-diaminopimeloyl-D-alanyl-D-alanine + UMP. It participates in cell wall biogenesis; peptidoglycan biosynthesis. In terms of biological role, catalyzes the initial step of the lipid cycle reactions in the biosynthesis of the cell wall peptidoglycan: transfers peptidoglycan precursor phospho-MurNAc-pentapeptide from UDP-MurNAc-pentapeptide onto the lipid carrier undecaprenyl phosphate, yielding undecaprenyl-pyrophosphoryl-MurNAc-pentapeptide, known as lipid I. This is Phospho-N-acetylmuramoyl-pentapeptide-transferase from Chlorobaculum parvum (strain DSM 263 / NCIMB 8327) (Chlorobium vibrioforme subsp. thiosulfatophilum).